A 360-amino-acid chain; its full sequence is Probable cinnamyl alcohol dehydrogenase 1 (360 aa).

Position 47 (cysteine 47) interacts with Zn(2+). An NADP(+)-binding site is contributed by threonine 49. Positions 69, 70, 100, 103, 106, 114, and 163 each coordinate Zn(2+). NADP(+)-binding positions include threonine 167, 189–194 (GLGGVG), 212–217 (SSSDKK), threonine 252, glycine 276, and 299–301 (SFI).

The protein belongs to the zinc-containing alcohol dehydrogenase family. Homodimer. It depends on Zn(2+) as a cofactor.

The catalysed reaction is (E)-cinnamyl alcohol + NADP(+) = (E)-cinnamaldehyde + NADPH + H(+). The enzyme catalyses (E)-coniferol + NADP(+) = (E)-coniferaldehyde + NADPH + H(+). It catalyses the reaction (E)-sinapyl alcohol + NADP(+) = (E)-sinapaldehyde + NADPH + H(+). It carries out the reaction (E)-4-coumaroyl alcohol + NADP(+) = (E)-4-coumaraldehyde + NADPH + H(+). The catalysed reaction is (E)-caffeyl alcohol + NADP(+) = (E)-caffeyl aldehyde + NADPH + H(+). The protein operates within aromatic compound metabolism; phenylpropanoid biosynthesis. Involved in lignin biosynthesis. Catalyzes the final step specific for the production of lignin monomers. Catalyzes the NADPH-dependent reduction of coniferaldehyde, 5-hydroxyconiferaldehyde, sinapaldehyde, 4-coumaraldehyde and caffeyl aldehyde to their respective alcohols. In Aralia cordata (Udo), this protein is Probable cinnamyl alcohol dehydrogenase 1 (CAD1).